A 143-amino-acid polypeptide reads, in one-letter code: Ribosome-binding factor A (143 aa).

The interval 1–20 is disordered; the sequence is MRFMGKNKFHTGPGPSQRQL.

This sequence belongs to the RbfA family. Monomer. Binds 30S ribosomal subunits, but not 50S ribosomal subunits or 70S ribosomes.

The protein resides in the cytoplasm. Functionally, one of several proteins that assist in the late maturation steps of the functional core of the 30S ribosomal subunit. Associates with free 30S ribosomal subunits (but not with 30S subunits that are part of 70S ribosomes or polysomes). Required for efficient processing of 16S rRNA. May interact with the 5'-terminal helix region of 16S rRNA. The sequence is that of Ribosome-binding factor A from Roseobacter denitrificans (strain ATCC 33942 / OCh 114) (Erythrobacter sp. (strain OCh 114)).